The sequence spans 465 residues: UDP-N-acetylmuramate--L-alanine ligase (465 aa).

ATP is bound at residue 112–118 (GTHGKTT).

This sequence belongs to the MurCDEF family.

Its subcellular location is the cytoplasm. It carries out the reaction UDP-N-acetyl-alpha-D-muramate + L-alanine + ATP = UDP-N-acetyl-alpha-D-muramoyl-L-alanine + ADP + phosphate + H(+). It functions in the pathway cell wall biogenesis; peptidoglycan biosynthesis. Its function is as follows. Cell wall formation. The protein is UDP-N-acetylmuramate--L-alanine ligase of Janthinobacterium sp. (strain Marseille) (Minibacterium massiliensis).